A 228-amino-acid chain; its full sequence is Cytidylate kinase (228 aa).

Position 17 to 25 (17 to 25) interacts with ATP; sequence GPTASGKGT.

It belongs to the cytidylate kinase family. Type 1 subfamily.

Its subcellular location is the cytoplasm. The enzyme catalyses CMP + ATP = CDP + ADP. The catalysed reaction is dCMP + ATP = dCDP + ADP. The sequence is that of Cytidylate kinase from Burkholderia cenocepacia (strain HI2424).